The following is a 144-amino-acid chain: Endoribonuclease YbeY (144 aa).

Residues His-104, His-108, and His-114 each coordinate Zn(2+).

It belongs to the endoribonuclease YbeY family. Zn(2+) serves as cofactor.

The protein resides in the cytoplasm. Functionally, single strand-specific metallo-endoribonuclease involved in late-stage 70S ribosome quality control and in maturation of the 3' terminus of the 16S rRNA. The polypeptide is Endoribonuclease YbeY (Nitratiruptor sp. (strain SB155-2)).